The sequence spans 268 residues: Myeloid leukemia factor 1 (268 aa).

Phosphoserine occurs at positions 6, 8, and 32. The tract at residues 50-125 (RVHNRRGHND…IGDEPPKVFQ (76 aa)) is interaction with COPS3. The interval 208-268 (PGRHNLENTR…KGSSVKSNKK (61 aa)) is disordered. Basic and acidic residues-rich tracts occupy residues 226–237 (PGSRELKRREKP) and 244–257 (EHGRRSDVLGDKLH).

It belongs to the MLF family. In terms of assembly, interacts with CENPU. Also interacts with NRBP1/MADM, YWHAZ/14-3-3-zeta and HNRPUL2/MANP. NRBP1 recruits a serine kinase which phosphorylates both itself and MLF1. Phosphorylated MLF1 then binds to YWHAZ and is retained in the cytoplasm. Retained in the nucleus by binding to HNRPUL2. Binds to COPS3/CSN3 which is required for suppression of COP1 and activation of p53. Phosphorylation is required for binding to YWHAZ.

It is found in the cytoplasm. Its subcellular location is the nucleus. The protein localises to the cell projection. It localises to the cilium. The protein resides in the cytoskeleton. It is found in the cilium basal body. In terms of biological role, involved in lineage commitment of primary hemopoietic progenitors by restricting erythroid formation and enhancing myeloid formation. Interferes with erythropoietin-induced erythroid terminal differentiation by preventing cells from exiting the cell cycle through suppression of CDKN1B/p27Kip1 levels. Suppresses COP1 activity via CSN3 which activates p53 and induces cell cycle arrest. Binds DNA and affects the expression of a number of genes so may function as a transcription factor in the nucleus. The protein is Myeloid leukemia factor 1 (MLF1) of Pongo abelii (Sumatran orangutan).